A 157-amino-acid polypeptide reads, in one-letter code: MIVNYLKNKFYNLLTTMIVLFIFVLSGAIFLTFLGFGLYGLSRILIYFRLGDFTYNRSMYDNLLYYGSYIIFGYFIIFAVEHLMDYFRKMLPENAYFRGATFHLISYTVATTLFYFIIHLNYVYINIDFWVIMVIIGFLYVCKLQFYPESKNLNNRK.

A run of 4 helical transmembrane segments spans residues 18–38 (IVLF…GFGL), 63–83 (LLYY…VEHL), 100–120 (ATFH…IIHL), and 122–142 (YVYI…LYVC).

It belongs to the multidrug resistance efflux pump SepA family.

It localises to the cell membrane. Its function is as follows. Involved in multidrug efflux. This chain is Multidrug resistance efflux pump SepA (sepA), found in Staphylococcus aureus (strain bovine RF122 / ET3-1).